The following is a 154-amino-acid chain: Proteasome subunit beta type-4 (154 aa).

At Met-1 the chain carries N-acetylmethionine. A propeptide spanning residues 1-45 is cleaved from the precursor; sequence MESILESRSGHWAGGPAPGQFYRIPPTPGSIVDPXSVLYGSPITR. Phosphotyrosine is present on Tyr-102.

It belongs to the peptidase T1B family. The 26S proteasome consists of a 20S proteasome core and two 19S regulatory subunits. The 20S proteasome core is a barrel-shaped complex made of 28 subunits that are arranged in four stacked rings. The two outer rings are each formed by seven alpha subunits, and the two inner rings are formed by seven beta subunits. The proteolytic activity is exerted by three beta-subunits PSMB5, PSMB6 and PSMB7. Forms a ternary complex with SMAD1 and OAZ1 before PSMB4 is incorporated into the 20S proteasome. Interacts with PRPF19.

The protein resides in the cytoplasm. The protein localises to the nucleus. Non-catalytic component of the 20S core proteasome complex involved in the proteolytic degradation of most intracellular proteins. This complex plays numerous essential roles within the cell by associating with different regulatory particles. Associated with two 19S regulatory particles, forms the 26S proteasome and thus participates in the ATP-dependent degradation of ubiquitinated proteins. The 26S proteasome plays a key role in the maintenance of protein homeostasis by removing misfolded or damaged proteins that could impair cellular functions, and by removing proteins whose functions are no longer required. Associated with the PA200 or PA28, the 20S proteasome mediates ubiquitin-independent protein degradation. This type of proteolysis is required in several pathways including spermatogenesis (20S-PA200 complex) or generation of a subset of MHC class I-presented antigenic peptides (20S-PA28 complex). SMAD1/OAZ1/PSMB4 complex mediates the degradation of the CREBBP/EP300 repressor SNIP1. The sequence is that of Proteasome subunit beta type-4 (PSMB4) from Sus scrofa (Pig).